Consider the following 363-residue polypeptide: Phosphoserine aminotransferase (363 aa).

Arg41 provides a ligand contact to L-glutamate. Pyridoxal 5'-phosphate is bound by residues 75–76, Trp100, Thr155, Asp175, and Gln198; that span reads AS. Position 199 is an N6-(pyridoxal phosphate)lysine (Lys199). 239 to 240 provides a ligand contact to pyridoxal 5'-phosphate; the sequence is NT.

Belongs to the class-V pyridoxal-phosphate-dependent aminotransferase family. SerC subfamily. Homodimer. It depends on pyridoxal 5'-phosphate as a cofactor.

The protein localises to the cytoplasm. The enzyme catalyses O-phospho-L-serine + 2-oxoglutarate = 3-phosphooxypyruvate + L-glutamate. The catalysed reaction is 4-(phosphooxy)-L-threonine + 2-oxoglutarate = (R)-3-hydroxy-2-oxo-4-phosphooxybutanoate + L-glutamate. Its pathway is amino-acid biosynthesis; L-serine biosynthesis; L-serine from 3-phospho-D-glycerate: step 2/3. Functionally, catalyzes the reversible conversion of 3-phosphohydroxypyruvate to phosphoserine and of 3-hydroxy-2-oxo-4-phosphonooxybutanoate to phosphohydroxythreonine. The polypeptide is Phosphoserine aminotransferase (Streptococcus suis (strain 98HAH33)).